A 698-amino-acid chain; its full sequence is Macrophomene synthase (698 aa).

Residues 21 to 340 are terpene cyclase; that stretch reads MEYMYSVPLD…SCDRYSSYRR (320 aa). Residue Asp113 coordinates Mg(2+). The DDXXD 1 signature appears at 113-117; it reads DNIAE. The NSE/DTE motif lies at 242-250; the sequence is NDFFSFNYE. Residues 341–696 are prenyltransferase; the sequence is EKHQMELPIR…IQLALERLRI (356 aa). The interval 368 to 387 is disordered; that stretch reads LPNGKQLDAPTESSGKDLSD. Residues Lys417, Arg420, and His449 each contribute to the isopentenyl diphosphate site. The Mg(2+) site is built by Asp456 and Asp460. The DDXXD 2 signature appears at 456 to 460; sequence DDIED. Arg465 is a dimethylallyl diphosphate binding site. Position 466 (Arg466) interacts with isopentenyl diphosphate. Residues Lys543, Thr544, Gln579, Asn586, Lys596, and Lys606 each contribute to the dimethylallyl diphosphate site.

It in the N-terminal section; belongs to the terpene synthase family. In the C-terminal section; belongs to the FPP/GGPP synthase family. Hexamer. Requires Mg(2+) as cofactor.

It catalyses the reaction 5 isopentenyl diphosphate + dimethylallyl diphosphate = all-trans-hexaprenyl diphosphate + 5 diphosphate. The enzyme catalyses all-trans-hexaprenyl diphosphate = macrophomene + diphosphate. Its function is as follows. Bifunctional terpene synthase that converts dimethylallyl diphosphate (DMAPP) and isopentenyl diphosphate (IPP) into macrophomene as a single product. The C-terminal prenyltransferase (PT) domain of MpMS catalyzes formation of hexaprenyl diphosphate (HexPP), whereas the N-terminal terpene cyclase (TC) domain catalyzes the cyclization of HexPP to macrophomene. This is Macrophomene synthase from Macrophomina phaseolina (strain MS6) (Charcoal rot fungus).